Consider the following 674-residue polypeptide: CLK4-associating serine/arginine rich protein (674 aa).

A Phosphoserine modification is found at Ser101. Disordered stretches follow at residues 171-232 (TVAE…GMAD) and 258-674 (EKAM…HYRH). A compositionally biased stretch (acidic residues) spans 182-214 (PEEEESAAEEESNSDEDEVIPDIDVEVDVDELN). A compositionally biased stretch (basic residues) spans 265–283 (RRSRRQRREFREKRLRGRK). Phosphoserine occurs at positions 285 and 294. Positions 290 to 313 (ARRDSPTYDPYKRSPSESSSESRS) are enriched in basic and acidic residues. Thr327 carries the phosphothreonine modification. Phosphoserine occurs at positions 331 and 335. Residues 356-365 (PPAPPQPGGP) show a composition bias toward pro residues. A compositionally biased stretch (low complexity) spans 378-399 (SSSSSSSSASRTSSSRSSSRSS). Composition is skewed to basic residues over residues 411–443 (SGRH…RRHS) and 481–492 (RGGRGLRHHSSS). Low complexity-rich tracts occupy residues 493–506 (RSRS…SRSR) and 514–532 (HSPS…SQSP). Ser547 bears the Phosphoserine mark. Thr573 carries the post-translational modification Phosphothreonine. Residues 585 to 647 (ALNRQFKADK…ERQYSRQSRS (63 aa)) adopt a coiled-coil conformation. Basic and acidic residues-rich tracts occupy residues 590 to 617 (FKAD…ELRA) and 625 to 641 (KERE…ERQY). The span at 642-651 (SRQSRSPSPR) shows a compositional bias: low complexity. The span at 659–674 (SRRRSRSRSRSPHYRH) shows a compositional bias: basic residues.

The protein belongs to the splicing factor SR family. Probably interacts with CLK4. Phosphorylated in vitro by CLK4.

It localises to the nucleus. Probably functions as an alternative splicing regulator. May regulate the mRNA splicing of genes such as CLK1. May act by regulating members of the CLK kinase family. This Homo sapiens (Human) protein is CLK4-associating serine/arginine rich protein (CLASRP).